The chain runs to 106 residues: Large ribosomal subunit protein eL42 (106 aa).

The disordered stretch occupies residues 26 to 53 (YKKGKDSLYAQGKRRYDRKQSGYGGQTK).

This sequence belongs to the eukaryotic ribosomal protein eL42 family. Component of the large ribosomal subunit.

It localises to the cytoplasm. Its function is as follows. Component of the large ribosomal subunit. The ribosome is a large ribonucleoprotein complex responsible for the synthesis of proteins in the cell. This chain is Large ribosomal subunit protein eL42 (rpl36a), found in Danio rerio (Zebrafish).